Consider the following 301-residue polypeptide: MTGAVSLLETLQQAVPLAGFTSFRVGGLAQFYDEPASVEAIATAWQWARLADFPVTFLGAGSNLLISDRGLPGLVLNLRRLQGATFDLATGCVEVAAGEPIPRLAWAAARQGWSGLEWAVGIPGTLGGAVVMNAGAQGGCMADILQSVQVITDQGLETWSREQLQYDYRHSVLQTGHACVVSAQLQLQPGFERSQVLTTTSTNFRQRKRTQPYHLPNCGSVFRNPEPQKAGQLIEACGLKGYQIGDAQVSELHANFILNCGAARAQDILSLIRHVQGTVGDHFGVNLHPEVKLLGEFQDVI.

Positions 24 to 190 (RVGGLAQFYD…VSAQLQLQPG (167 aa)) constitute an FAD-binding PCMH-type domain. R169 is a catalytic residue. Catalysis depends on S220, which acts as the Proton donor. Residue E290 is part of the active site.

This sequence belongs to the MurB family. FAD serves as cofactor.

Its subcellular location is the cytoplasm. It carries out the reaction UDP-N-acetyl-alpha-D-muramate + NADP(+) = UDP-N-acetyl-3-O-(1-carboxyvinyl)-alpha-D-glucosamine + NADPH + H(+). The protein operates within cell wall biogenesis; peptidoglycan biosynthesis. In terms of biological role, cell wall formation. In Synechococcus sp. (strain ATCC 27144 / PCC 6301 / SAUG 1402/1) (Anacystis nidulans), this protein is UDP-N-acetylenolpyruvoylglucosamine reductase.